The chain runs to 299 residues: Zinc finger protein-like 1 homolog (299 aa).

Residues 1 to 43 (MGLCKCPKRLVTNQFCFEHRVNVCEHCMVQSHPKCIVQSYLQW) form a B box-type; degenerate zinc finger. The segment at 53-101 (CTLCGTTLEQGDCVRLVCYHVFHWDCLNARQAALPANTAPRGHQCPACS) adopts an RING-type; atypical zinc-finger fold. The disordered stretch occupies residues 200–231 (AGDYASSRRPLLPRQSPIGGTDRDDNKYQRRT). A Phosphoserine modification is found at serine 215. Residues 256–276 (WFLVTAGILAFVLFVYLMAWL) traverse the membrane as a helical segment.

Belongs to the ZFPL1 family.

Its subcellular location is the membrane. The protein is Zinc finger protein-like 1 homolog of Drosophila melanogaster (Fruit fly).